A 247-amino-acid chain; its full sequence is Probable transcriptional regulatory protein LAF_0541 (247 aa).

The tract at residues 1-22 (MSGHSKWHNIQGRKNAQDAKRG) is disordered.

The protein belongs to the TACO1 family.

The protein localises to the cytoplasm. The polypeptide is Probable transcriptional regulatory protein LAF_0541 (Limosilactobacillus fermentum (strain NBRC 3956 / LMG 18251) (Lactobacillus fermentum)).